A 293-amino-acid chain; its full sequence is MASQVNALLLPVIESTPLHQITKVALTTTLTSKQSDYKFKEIAVPLTKSLQLYEKAQRRQDLRASLKALESIIYQTHFQWNNPLPRHAHLFQKHYHFLLTHWPFENHRDLVDSIAVNNGKLNSTSSRSVWLKADWITLFNVKNPWVQTPPSLMRLSGTDLDTFTPERIFLINSLGNHYKFLIANSHLSYNHKKYPSPGVQIPVRNALGEVSPAKQIAQLFARQLSHIYKSLFIENPPLSPENELALTAVFYDETVERRLRRLYMRACARAYTTTNADSTTEPLMFHCTRWEVD.

The protein belongs to the GEP5 family.

It localises to the mitochondrion. Its function is as follows. Essential for respiratory growth and required for maintenance of mtDNA. Required for cell survival in the absence of prohibitins. This is Genetic interactor of prohibitin 5, mitochondrial (GEP5) from Saccharomyces cerevisiae (strain ATCC 204508 / S288c) (Baker's yeast).